The sequence spans 357 residues: Probable glutamine amidotransferase DUG3 (357 aa).

Cys-2 functions as the For GATase activity in the catalytic mechanism. Residues 2 to 260 enclose the Glutamine amidotransferase type-2 domain; sequence CRFLIFKGKQ…PGEYRVERLD (259 aa).

It belongs to the DUG3 family. As to quaternary structure, component of the GSH degradosomal complex composed of at least DUG1, DUG2 and DUG3.

The protein resides in the cytoplasm. Component of the GSH degradosomal complex involved in the degradation of glutathione (GSH) and other peptides containing a gamma-glu-X bond. In Saccharomyces cerevisiae (strain ATCC 204508 / S288c) (Baker's yeast), this protein is Probable glutamine amidotransferase DUG3 (DUG3).